Here is a 237-residue protein sequence, read N- to C-terminus: Periplasmic deoxyribonuclease (237 aa).

The first 27 residues, 1 to 27, serve as a signal peptide directing secretion; sequence MSRPSRVLGLPLLSLGLTLLVSTPLQA.

Belongs to the EndA/NucM nuclease family.

The protein localises to the periplasm. Endonuclease which is capable of degrading plasmid DNA. The protein is Periplasmic deoxyribonuclease (dnsH) of Aeromonas hydrophila.